Reading from the N-terminus, the 588-residue chain is Acid beta-fructofuranosidase 1, vacuolar (588 aa).

The Cytoplasmic portion of the chain corresponds to 1 to 31; sequence MDTSTSAYAPLPGEDPLFSGHPPASLRRSWK. The propeptide at 1–115 is removed in mature form; it reads MDTSTSAYAP…LSYNWTNAMF (115 aa). A helical; Signal-anchor for type II membrane protein membrane pass occupies residues 32-52; it reads GFAVIFASVLFLLSLVGLIIH. Residues 53–588 lie on the Lumenal side of the membrane; that stretch reads QGPQQPPDVM…LRALRKEVGR (536 aa). The interval 57–86 is disordered; the sequence is QPPDVMPDKQDEHHHPQSTTPASETTASWE. Over residues 62–71 the composition is skewed to basic and acidic residues; it reads MPDKQDEHHH. Positions 73–84 are enriched in polar residues; it reads QSTTPASETTAS. Residues 130 to 133, Gln149, and Trp157 contribute to the substrate site; that span reads WMND. Asp133 is a catalytic residue. An N-linked (GlcNAc...) asparagine glycan is attached at Asn159. 192–193 is a substrate binding site; the sequence is WS. The N-linked (GlcNAc...) asparagine glycan is linked to Asn226. Substrate is bound by residues 256-257, Glu311, and Asp344; that span reads RD. A disulfide bond links Cys499 and Cys545.

This sequence belongs to the glycosyl hydrolase 32 family. In terms of assembly, monomer. May be present in two forms, a 70 kDa monomer and a heterodimer of the 30 kDa and 38 kDa subunits. The ratio of the levels of the two forms within cells appears to be regulated developmentally. Post-translationally, glycosylated. As to expression, expressed in buds, stems, roots and leaves. Expressed in the epidermal cells of young leaves and of primordial leaves.

Its subcellular location is the membrane. It is found in the vacuole lumen. The catalysed reaction is Hydrolysis of terminal non-reducing beta-D-fructofuranoside residues in beta-D-fructofuranosides.. Its function is as follows. Acidic vacuolar invertase involved in light-induced bud burst. This chain is Acid beta-fructofuranosidase 1, vacuolar, found in Rosa hybrid cultivar.